Consider the following 803-residue polypeptide: Xylosyltransferase sqv-6 (803 aa).

Over 3–13 (VVGGVNTNYRH) the chain is Cytoplasmic. The chain crosses the membrane as a helical; Signal-anchor for type II membrane protein span at residues 14–34 (YALVIVLFFFLNVYLLYSAQN). Over 35 to 803 (SVQIRKDEGE…GWDEEARILR (769 aa)) the chain is Lumenal. Cys-63 and Cys-91 are disulfide-bonded. N-linked (GlcNAc...) asparagine glycans are attached at residues Asn-95, Asn-175, and Asn-224. Disulfide bonds link Cys-107/Cys-446, Cys-465/Cys-479, and Cys-467/Cys-477. The WSC domain occupies 115-209 (IDQRIGCFLD…FNAVEIFRTD (95 aa)). Residues Asp-265 and 294–296 (TIW) each bind UDP-alpha-D-xylose. Residue Asn-326 is glycosylated (N-linked (GlcNAc...) asparagine). A UDP-alpha-D-xylose-binding site is contributed by 399-400 (DW). UDP-alpha-D-xylose-binding positions include Ser-480 and 506–507 (RK). 2 N-linked (GlcNAc...) asparagine glycosylation sites follow: Asn-615 and Asn-718. Cysteines 769 and 775 form a disulfide.

Belongs to the glycosyltransferase 14 family. XylT subfamily. The cofactor is a divalent metal cation.

The protein localises to the endoplasmic reticulum membrane. It localises to the golgi apparatus membrane. The enzyme catalyses UDP-alpha-D-xylose + L-seryl-[protein] = 3-O-(beta-D-xylosyl)-L-seryl-[protein] + UDP + H(+). The protein operates within glycan metabolism; chondroitin sulfate biosynthesis. It functions in the pathway glycan metabolism; heparan sulfate biosynthesis. In terms of biological role, catalyzes the first step in biosynthesis of glycosaminoglycan. Transfers D-xylose from UDP-D-xylose to specific serine residues of the core protein. This is Xylosyltransferase sqv-6 from Caenorhabditis briggsae.